The sequence spans 307 residues: Agmatinase (307 aa).

Residues His126, Asp149, His151, Asp153, Asp230, and Asp232 each coordinate Mn(2+).

It belongs to the arginase family. Agmatinase subfamily. Mn(2+) serves as cofactor.

The enzyme catalyses agmatine + H2O = urea + putrescine. The protein operates within amine and polyamine biosynthesis; putrescine biosynthesis via agmatine pathway; putrescine from agmatine: step 1/1. Functionally, catalyzes the formation of putrescine from agmatine. The sequence is that of Agmatinase from Sodalis glossinidius (strain morsitans).